The primary structure comprises 1108 residues: Ubiquitin carboxyl-terminal hydrolase 5 (1108 aa).

An MATH domain is found at 55–187; it reads FQRFTWHIKS…DGALLLTAYV (133 aa). Active-site nucleophile residues include Cys120 and Cys222. In terms of domain architecture, USP spans 213 to 528; it reads VGLKNQGATC…SAYMLLYLRK (316 aa). The active-site Proton acceptor is the His464.

Belongs to the peptidase C19 family.

The protein resides in the nucleus. It carries out the reaction Thiol-dependent hydrolysis of ester, thioester, amide, peptide and isopeptide bonds formed by the C-terminal Gly of ubiquitin (a 76-residue protein attached to proteins as an intracellular targeting signal).. Its function is as follows. Hydrolase that deubiquitinates target proteins. Cleaves the UBL propeptide in sde2. The protein is Ubiquitin carboxyl-terminal hydrolase 5 (ubp5) of Schizosaccharomyces pombe (strain 972 / ATCC 24843) (Fission yeast).